Reading from the N-terminus, the 215-residue chain is Transmembrane emp24 domain-containing protein 11 (215 aa).

The N-terminal stretch at 1–17 (MQIQTILLCFSFSFSAA) is a signal peptide. Residues 18–167 (FYFHAGEREE…ILKEQDYQRD (150 aa)) are Lumenal-facing. The GOLD domain maps to 27–125 (EKCIIEDIPS…KLRIHLDIRV (99 aa)). Asn105 carries N-linked (GlcNAc...) asparagine glycosylation. Residues 136-171 (QAKDKVNEVTFKLQHLIEQVEQILKEQDYQRDREEN) adopt a coiled-coil conformation. A helical transmembrane segment spans residues 168 to 185 (REENFRITSEDTNRNVLW). Residues 186–215 (WAFAQILIFISVGIFQMKHLKDFFIAKKLV) are Cytoplasmic-facing. The short motif at 208 to 209 (FF) is the COPII vesicle coat-binding element. Positions 208–215 (FFIAKKLV) match the COPI vesicle coat-binding motif.

Belongs to the EMP24/GP25L family.

Its subcellular location is the endoplasmic reticulum membrane. Its function is as follows. Part of a complex whose function is to bind Ca(2+) to the ER membrane and thereby regulate the retention of ER resident proteins. The polypeptide is Transmembrane emp24 domain-containing protein 11 (Tmed11) (Mus musculus (Mouse)).